Consider the following 364-residue polypeptide: Putative zinc metalloprotease all3971 (364 aa).

His17 is a Zn(2+) binding site. Glu18 is a catalytic residue. His21 provides a ligand contact to Zn(2+). 3 helical membrane passes run 92 to 114 (AIVI…LAQV), 281 to 303 (LFFF…LPAL), and 329 to 346 (VMQT…FLIV). Residues 103 to 188 (LIFAYMLLLA…KSIQLTVARG (86 aa)) form the PDZ domain.

The protein belongs to the peptidase M50B family. Requires Zn(2+) as cofactor.

It is found in the cell inner membrane. This is Putative zinc metalloprotease all3971 from Nostoc sp. (strain PCC 7120 / SAG 25.82 / UTEX 2576).